A 136-amino-acid polypeptide reads, in one-letter code: MLSPKRTRFRKQHRGRMKGKSYRGNCICFGRYALQALEPTWITARQIEAGRRAMTRYARRGGKIWVRIFPDKPVTIRPTETRMGSGKGSPEYWVAVVKPGRILYEMGGVSETVARAAISIAASKMPIRSQFLRLEI.

Belongs to the universal ribosomal protein uL16 family. In terms of assembly, part of the 50S ribosomal subunit.

It is found in the plastid. Its subcellular location is the chloroplast. This chain is Large ribosomal subunit protein uL16c, found in Oryza sativa (Rice).